Reading from the N-terminus, the 426-residue chain is UDP-N-acetylglucosamine 1-carboxyvinyltransferase (426 aa).

22-23 is a phosphoenolpyruvate binding site; that stretch reads KN. A UDP-N-acetyl-alpha-D-glucosamine-binding site is contributed by arginine 94. Residue cysteine 118 is the Proton donor of the active site. Cysteine 118 is modified (2-(S-cysteinyl)pyruvic acid O-phosphothioketal). UDP-N-acetyl-alpha-D-glucosamine is bound by residues 123–127, aspartate 309, and isoleucine 331; that span reads RPVDL.

Belongs to the EPSP synthase family. MurA subfamily.

Its subcellular location is the cytoplasm. It catalyses the reaction phosphoenolpyruvate + UDP-N-acetyl-alpha-D-glucosamine = UDP-N-acetyl-3-O-(1-carboxyvinyl)-alpha-D-glucosamine + phosphate. Its pathway is cell wall biogenesis; peptidoglycan biosynthesis. Its function is as follows. Cell wall formation. Adds enolpyruvyl to UDP-N-acetylglucosamine. The protein is UDP-N-acetylglucosamine 1-carboxyvinyltransferase of Paracoccus denitrificans (strain Pd 1222).